The primary structure comprises 125 residues: Small ribosomal subunit protein uS13 (125 aa).

Belongs to the universal ribosomal protein uS13 family. As to quaternary structure, part of the 30S ribosomal subunit. Forms a loose heterodimer with protein S19. Forms two bridges to the 50S subunit in the 70S ribosome.

Functionally, located at the top of the head of the 30S subunit, it contacts several helices of the 16S rRNA. In the 70S ribosome it contacts the 23S rRNA (bridge B1a) and protein L5 of the 50S subunit (bridge B1b), connecting the 2 subunits; these bridges are implicated in subunit movement. Contacts the tRNAs in the A and P-sites. The chain is Small ribosomal subunit protein uS13 from Rickettsia felis (strain ATCC VR-1525 / URRWXCal2) (Rickettsia azadi).